The following is a 404-amino-acid chain: MNQALPNSFRSGPDERGHFGIYGGRFVAETLMPLILDLEKAYAEAKADPAFRAEMDNHLKHYVGRPSALYFAERLTEHFGGAKIYFKREDLNHTGAHKVNNVLGQIMLAKRMGKPRVIAETGAGMHGVATATMCAKFGLECVVFMGAVDVERQQPNVLRMKALGAEVRPVTSGANTLKDAMNEALRDWVTNVHDTFYCIGTVAGPHPYPMMVRDFQAVIGQEVREQIMQAEGRLPDSLVACIGGGSNAMGLFHPFLDDPGVAIYGVEAAGHGLDKLHAASIAGGKPGVLHGNRTYLLMDADGQIEEAHSISAGLDYPGVGPEHSWLHDVGRVNFLSATDTEALDAFKLCCRLEGIIPALEPSHALAKVADLAPKLPKDHLMVVNMSGRGDKDLASVAEHLGGKF.

Lysine 98 carries the post-translational modification N6-(pyridoxal phosphate)lysine.

It belongs to the TrpB family. Tetramer of two alpha and two beta chains. The cofactor is pyridoxal 5'-phosphate.

It catalyses the reaction (1S,2R)-1-C-(indol-3-yl)glycerol 3-phosphate + L-serine = D-glyceraldehyde 3-phosphate + L-tryptophan + H2O. It participates in amino-acid biosynthesis; L-tryptophan biosynthesis; L-tryptophan from chorismate: step 5/5. Functionally, the beta subunit is responsible for the synthesis of L-tryptophan from indole and L-serine. The protein is Tryptophan synthase beta chain of Rhodopseudomonas palustris (strain ATCC BAA-98 / CGA009).